A 431-amino-acid chain; its full sequence is Serine hydroxymethyltransferase 3 (431 aa).

Residues Leu-131 and 135 to 137 (GHL) each bind (6S)-5,6,7,8-tetrahydrofolate. Lys-240 bears the N6-(pyridoxal phosphate)lysine mark.

This sequence belongs to the SHMT family. In terms of assembly, homodimer. Pyridoxal 5'-phosphate is required as a cofactor.

It is found in the cytoplasm. It catalyses the reaction (6R)-5,10-methylene-5,6,7,8-tetrahydrofolate + glycine + H2O = (6S)-5,6,7,8-tetrahydrofolate + L-serine. Its pathway is one-carbon metabolism; tetrahydrofolate interconversion. It participates in amino-acid biosynthesis; glycine biosynthesis; glycine from L-serine: step 1/1. Catalyzes the reversible interconversion of serine and glycine with tetrahydrofolate (THF) serving as the one-carbon carrier. This reaction serves as the major source of one-carbon groups required for the biosynthesis of purines, thymidylate, methionine, and other important biomolecules. Also exhibits THF-independent aldolase activity toward beta-hydroxyamino acids, producing glycine and aldehydes, via a retro-aldol mechanism. This is Serine hydroxymethyltransferase 3 from Colwellia psychrerythraea (strain 34H / ATCC BAA-681) (Vibrio psychroerythus).